A 1140-amino-acid chain; its full sequence is MATPGMSWQQHYYGGSAAKFAPSPATAQLAGHSMDYSQEMHLKMSKKIAQLTKVIYALNTKNDEHESAIQALKDAHEEEIQQILAETREKILQYKSKVTEELDLRRKIQVLESSLEDHIKMKQQALTEFEAYKHRVEDMQLCAEAQHVQRIVTMSREVEEIRRKFEEKLRSFGQLQVQFEKDKRLALEDLQAAHRREIQELLKSQQDHSASVNKGQEKAEELHRMEVESLNKMLEELRLERKKLIEDYEGKLNKAQSFYERELDTLKRSQLFTAESLQASKEKEADLRKEFQGQEAILRKTIGKLKTELQMVQDEAGSLLDKCQKLQTALAIAENNVQVLQKQLDDAKEGEMALLSKHKEVESELAAARERLQQQASDLVLKASHIGMLQATQMTQEVTIKDLESEKSRVNERLSQLEEERAFLRSKTQSLDEEQKQQILELEKKVNEAKRTQQEYYERELKNLQSRLEEEVTQLNEAHSKTLEELAWKHHMAIEAVHSNAIRDKKKLQMDLEEQHNKDKLNLEEDKNQLQQELENLKEVLEDKLNTANQEIGHLQDMVRKSEQGLGSAEGLIASLQDSQERLQNELDLTKDSLKETKDALLNVEGELEQERQQHEETIAAMKEEEKLKVDKMAHDLEIKWTENLRQECSKLREELRLQHEEDKKSAMSQLLQLKDREKNAARDSWQKKVEDLLNQISLLKQNLEIQLSQSQTSLQQLQAQFTQERQRLTQELEELEEQHQQRHKSLKEAHVLAFQTMEEEKEKEQRALENHLQQKHSAELQSLKDAHRESMEGFRIEMEQELQTLRFELEDEGKAMLASLRSELNHQHAAAIDLLRHNHHQELAAAKMELERSIDISRRQSKEHICRITDLQEELRHREHHISELDKEVQHLHENISALTKELEFKGKEILRIRSESNQQIRLHEQDLNKRLEKELDVMTADHLREKNIMRADFNKTNELLKEINAALQVSLEEMEEKYLMRESKPEDIQMITELKAMLTERDQIIKKLIEDNKFYQLELVNRETNFNKVFNSSPTVGVINPLAKQKKKNDKSPTNRFVSVPNLSALESGGVGNGHPNRLDPIPNSPVHDIEFNSSKPLPQPVPPKGPKTFLSPAQSEASPVASPDPQRQEWFARYFTF.

3 coiled-coil regions span residues 57–256 (ALNT…NKAQ), 296–800 (AILR…IEME), and 868–907 (RITDLQEELRHREHHISELDKEVQHLHENISALTKELEFK). Residues 1063 to 1128 (PNLSALESGG…EASPVASPDP (66 aa)) form a disordered region.

It belongs to the FAM184 family.

The protein resides in the cytoplasm. It localises to the P-body. It is found in the cytoskeleton. Its subcellular location is the microtubule organizing center. The protein localises to the centrosome. The protein resides in the centriolar satellite. The sequence is that of Protein FAM184A from Homo sapiens (Human).